Consider the following 290-residue polypeptide: Microtubule-associated protein P320 (290 aa).

8 consecutive repeats follow at residues 1-38 (SEYR…PIDP), 39-76 (SEYR…PIDP), 77-114 (SEYR…PIDP), 115-152 (SEYR…PIDP), 153-190 (SEYR…PIDP), 191-228 (SEYR…PIDP), 229-266 (SEYR…PIDP), and 267-290 (SEYR…DESH). A disordered region spans residues 251–290 (SHFLTTTHEAYKPIDPSEYRQKRTVGEEVTTDMRHVDESH). Basic and acidic residues predominate over residues 259 to 290 (EAYKPIDPSEYRQKRTVGEEVTTDMRHVDESH).

The protein resides in the cytoplasm. It localises to the cytoskeleton. The polypeptide is Microtubule-associated protein P320 (Trypanosoma brucei brucei).